We begin with the raw amino-acid sequence, 158 residues long: Ribonuclease H (158 aa).

One can recognise an RNase H type-1 domain in the interval 3–144 (ELKLIHIFTD…CDQLARAAAE (142 aa)). Residues Asp12, Glu50, Asp72, and Asp136 each contribute to the Mg(2+) site.

Belongs to the RNase H family. As to quaternary structure, monomer. The cofactor is Mg(2+).

The protein localises to the cytoplasm. The enzyme catalyses Endonucleolytic cleavage to 5'-phosphomonoester.. Endonuclease that specifically degrades the RNA of RNA-DNA hybrids. The chain is Ribonuclease H from Shewanella sp. (strain MR-4).